Here is a 253-residue protein sequence, read N- to C-terminus: Probable U2 small nuclear ribonucleoprotein A' (253 aa).

4 LRR repeats span residues 20–41, 43–64, 65–86, and 89–110; these read NMRE…GVTR, QFDV…PTFS, RLNT…IATK, and NLKT…EPLA. An LRRCT domain is found at 123–161; it reads NPITHKDNYRMYMIYKLPTVRVIDFNRVRLTEREAAKKM. 2 disordered regions span residues 163–205 and 232–253; these read KGKS…EDRE and VPEK…AMES. A compositionally biased stretch (basic and acidic residues) spans 169 to 182; that stretch reads KARDAIQKSVHTED.

The protein belongs to the U2 small nuclear ribonucleoprotein A family. Interacts with rnp-3.

The protein resides in the nucleus. In terms of biological role, this protein is associated with sn-RNP U2. It helps the A' protein to bind stem loop IV of U2 snRNA. Required maternally for early embryonic development and zygotically for germline and somatic development. Has a role in the switch from mitosis to meiosis. Might function in alternative splicing. The polypeptide is Probable U2 small nuclear ribonucleoprotein A' (mog-2) (Caenorhabditis elegans).